The following is a 478-amino-acid chain: GDP-fucose protein O-fucosyltransferase 3 (478 aa).

At 1–9 the chain is on the cytoplasmic side; that stretch reads MVRIQRGKL. The chain crosses the membrane as a helical; Signal-anchor for type II membrane protein span at residues 10–30; sequence LAFCLCVMATVFLLITLQVVV. At 31–478 the chain is on the lumenal side; that stretch reads ELGKFEGKKF…QEFWALVFKD (448 aa). N-linked (GlcNAc...) asparagine glycans are attached at residues Asn110 and Asn168. The cysteines at positions 389 and 392 are disulfide-linked.

Belongs to the glycosyltransferase 10 family.

The protein resides in the endoplasmic reticulum membrane. It carries out the reaction L-threonyl-[protein] + GDP-beta-L-fucose = 3-O-(alpha-L-fucosyl)-L-threonyl-[protein] + GDP + H(+). It catalyses the reaction L-seryl-[protein] + GDP-beta-L-fucose = 3-O-(alpha-L-fucosyl)-L-seryl-[protein] + GDP + H(+). It participates in protein modification; protein glycosylation. In terms of biological role, protein O-fucosyltransferase that specifically catalyzes O-fucosylation of serine or threonine residues in EMI domains of target proteins, such as MMRN1, MMRN2 and EMID1. Attaches fucose through an O-glycosidic linkage. O-fucosylation of EMI domain-containing proteins may be required for facilitating protein folding and secretion. May also show alpha-(1,3)-fucosyltransferase activity toward the innermost N-acetyl glucosamine (GlcNAc) residue in biantennary N-glycan acceptors. However, this was tested with a library of synthetic substrates and this activity is unsure in vivo. May be involved in biosynthesis of Lewis X-carrying biantennary N-glycans that regulate neuron stem cell self-renewal during brain development. The protein is GDP-fucose protein O-fucosyltransferase 3 (FUT10) of Bos taurus (Bovine).